The chain runs to 271 residues: Elongation factor Ts (271 aa).

The interval 76–79 (TDFV) is involved in Mg(2+) ion dislocation from EF-Tu.

This sequence belongs to the EF-Ts family.

It localises to the cytoplasm. Its function is as follows. Associates with the EF-Tu.GDP complex and induces the exchange of GDP to GTP. It remains bound to the aminoacyl-tRNA.EF-Tu.GTP complex up to the GTP hydrolysis stage on the ribosome. The sequence is that of Elongation factor Ts from Mycobacterium bovis (strain BCG / Pasteur 1173P2).